A 1870-amino-acid chain; its full sequence is Dedicator of cytokinesis protein 5 (1870 aa).

In terms of domain architecture, SH3 spans 8-69; the sequence is KRQKYGVAIY…PETYIHLKEA (62 aa). At serine 365 the chain carries Phosphoserine. Positions 443-627 constitute a C2 DOCK-type domain; that stretch reads RNDIYVTLIH…DSFQIATLIC (185 aa). The residue at position 818 (lysine 818) is an N6-acetyllysine. The region spanning 1231 to 1642 is the DOCKER domain; it reads YKEKKREDIY…VEKHYGVITL (412 aa). Residues 1679-1702 form a disordered region; the sequence is VVSTSSNSSDNAPSRPGSDGSILE. A phosphoserine mark is found at serine 1756, serine 1766, serine 1785, and serine 1789. The tract at residues 1772 to 1870 is disordered; the sequence is NRLSPFHGSS…GIPTSEPGSQ (99 aa). Residues 1784 to 1794 show a composition bias toward pro residues; sequence QSTPLSPPPLT. At threonine 1794 the chain carries Phosphothreonine. Over residues 1797 to 1808 the composition is skewed to polar residues; sequence ATRTLSSPSLQT. At threonine 1814 the chain carries Phosphothreonine. The span at 1815-1824 shows a compositional bias: pro residues; the sequence is PVPPPPPPKS. Phosphoserine occurs at positions 1834 and 1869.

This sequence belongs to the DOCK family. Interacts with CRK and CRKL. Interacts (via N-terminus) with tensin TNS3 (via N-terminus); the interaction increases DOCK5 guanine nucleotide exchange activity towards Rac. Interacts with ELMO1.

The protein resides in the cytoplasm. It is found in the cell membrane. Its subcellular location is the cell projection. The protein localises to the podosome. In terms of biological role, guanine nucleotide exchange factor (GEF) for Rho and Rac. GEF proteins activate small GTPases by exchanging bound GDP for free GTP. Along with DOCK1, mediates CRK/CRKL regulation of epithelial and endothelial cell spreading and migration on type IV collagen. This Homo sapiens (Human) protein is Dedicator of cytokinesis protein 5 (DOCK5).